We begin with the raw amino-acid sequence, 352 residues long: UDP-N-acetylglucosamine--N-acetylmuramyl-(pentapeptide) pyrophosphoryl-undecaprenol N-acetylglucosamine transferase (352 aa).

2 residues coordinate UDP-N-acetyl-alpha-D-glucosamine: Ser195 and Gln287.

Belongs to the glycosyltransferase 28 family. MurG subfamily.

It is found in the cell membrane. It catalyses the reaction Mur2Ac(oyl-L-Ala-gamma-D-Glu-L-Lys-D-Ala-D-Ala)-di-trans,octa-cis-undecaprenyl diphosphate + UDP-N-acetyl-alpha-D-glucosamine = beta-D-GlcNAc-(1-&gt;4)-Mur2Ac(oyl-L-Ala-gamma-D-Glu-L-Lys-D-Ala-D-Ala)-di-trans,octa-cis-undecaprenyl diphosphate + UDP + H(+). It functions in the pathway cell wall biogenesis; peptidoglycan biosynthesis. Functionally, cell wall formation. Catalyzes the transfer of a GlcNAc subunit on undecaprenyl-pyrophosphoryl-MurNAc-pentapeptide (lipid intermediate I) to form undecaprenyl-pyrophosphoryl-MurNAc-(pentapeptide)GlcNAc (lipid intermediate II). The sequence is that of UDP-N-acetylglucosamine--N-acetylmuramyl-(pentapeptide) pyrophosphoryl-undecaprenol N-acetylglucosamine transferase from Streptococcus pneumoniae (strain 70585).